The primary structure comprises 383 residues: Succinyl-diaminopimelate desuccinylase (383 aa).

Histidine 73 is a Zn(2+) binding site. The active site involves aspartate 75. Aspartate 107 provides a ligand contact to Zn(2+). Glutamate 141 (proton acceptor) is an active-site residue. Residues glutamate 142, glutamate 170, and histidine 356 each contribute to the Zn(2+) site.

This sequence belongs to the peptidase M20A family. DapE subfamily. In terms of assembly, homodimer. Zn(2+) is required as a cofactor. Requires Co(2+) as cofactor.

The enzyme catalyses N-succinyl-(2S,6S)-2,6-diaminopimelate + H2O = (2S,6S)-2,6-diaminopimelate + succinate. The protein operates within amino-acid biosynthesis; L-lysine biosynthesis via DAP pathway; LL-2,6-diaminopimelate from (S)-tetrahydrodipicolinate (succinylase route): step 3/3. Catalyzes the hydrolysis of N-succinyl-L,L-diaminopimelic acid (SDAP), forming succinate and LL-2,6-diaminopimelate (DAP), an intermediate involved in the bacterial biosynthesis of lysine and meso-diaminopimelic acid, an essential component of bacterial cell walls. This Pseudomonas putida (strain W619) protein is Succinyl-diaminopimelate desuccinylase.